A 455-amino-acid chain; its full sequence is J protein JJJ2 (455 aa).

Positions 12-76 (TYYSILGVPT…QLRAEYDKKL (65 aa)) constitute a J domain. A disordered region spans residues 104 to 241 (RNSKPYEQQP…RKKSEKKATP (138 aa)). Residues 133 to 144 (NSNPHNENSSNN) are compositionally biased toward low complexity. Residues 156–168 (TLSKDSEDKHGTD) show a composition bias toward basic and acidic residues.

It localises to the cytoplasm. Its subcellular location is the nucleus. This chain is J protein JJJ2 (JJJ2), found in Candida glabrata (strain ATCC 2001 / BCRC 20586 / JCM 3761 / NBRC 0622 / NRRL Y-65 / CBS 138) (Yeast).